The following is a 379-amino-acid chain: Succinate--CoA ligase [ADP-forming] subunit beta (379 aa).

The 227-residue stretch at 9 to 235 folds into the ATP-grasp domain; sequence KEIAKNNGIP…GRELSEMEAI (227 aa). Lys-45, Glu-91, Ile-94, and Glu-99 together coordinate ATP. Residues Asn-191 and Asp-205 each coordinate Mg(2+). Residues Asn-255 and 312–314 each bind substrate; that span reads GIT.

It belongs to the succinate/malate CoA ligase beta subunit family. In terms of assembly, heterotetramer of two alpha and two beta subunits. Mg(2+) serves as cofactor.

It carries out the reaction succinate + ATP + CoA = succinyl-CoA + ADP + phosphate. The catalysed reaction is GTP + succinate + CoA = succinyl-CoA + GDP + phosphate. Its pathway is carbohydrate metabolism; tricarboxylic acid cycle; succinate from succinyl-CoA (ligase route): step 1/1. Succinyl-CoA synthetase functions in the citric acid cycle (TCA), coupling the hydrolysis of succinyl-CoA to the synthesis of either ATP or GTP and thus represents the only step of substrate-level phosphorylation in the TCA. The beta subunit provides nucleotide specificity of the enzyme and binds the substrate succinate, while the binding sites for coenzyme A and phosphate are found in the alpha subunit. This chain is Succinate--CoA ligase [ADP-forming] subunit beta, found in Staphylothermus marinus (strain ATCC 43588 / DSM 3639 / JCM 9404 / F1).